A 334-amino-acid chain; its full sequence is Tryptophan--tRNA ligase (334 aa).

ATP is bound by residues 11-13 and 19-20; these read QPS and GN. The short motif at 12–20 is the 'HIGH' region element; that stretch reads PSGELTIGN. An L-tryptophan-binding site is contributed by D135. Residues 147 to 149, V186, and 195 to 199 contribute to the ATP site; these read GED and KMSKS. Positions 195–199 match the 'KMSKS' region motif; it reads KMSKS.

This sequence belongs to the class-I aminoacyl-tRNA synthetase family. Homodimer.

The protein resides in the cytoplasm. It carries out the reaction tRNA(Trp) + L-tryptophan + ATP = L-tryptophyl-tRNA(Trp) + AMP + diphosphate + H(+). In terms of biological role, catalyzes the attachment of tryptophan to tRNA(Trp). The chain is Tryptophan--tRNA ligase from Salmonella typhi.